The sequence spans 366 residues: Autoinducer 2-binding periplasmic protein LuxP (366 aa).

An N-terminal signal peptide occupies residues 1–13 (MKKILLTCLLASA).

This sequence belongs to the bacterial solute-binding protein 2 family.

Its subcellular location is the periplasm. In terms of biological role, binds to an autoinducer molecule. This complex then interacts with the LuxQ sensor protein. The polypeptide is Autoinducer 2-binding periplasmic protein LuxP (luxP) (Vibrio vulnificus (strain YJ016)).